A 692-amino-acid polypeptide reads, in one-letter code: MGTVSSRRSWWPLPLPLLLLLLLGLAGARAQEDEDGDYEELVLALRSEEDGLADAPEHGATATFHRCAKDPWRLPGTYVVVLKEETHRSQSERTARRLQAQAARRGYLTKILHVFHHLLPGFLVKMSGDLLELALKLPHVDYIEEDSSVFAQSIPWNLERITPARYRADEYQPPKGGSLVEVYLLDTSIQSDHREIEGRVMVTDFESVPEEDGTRFHRQASKCDSHGTHLAGVVSGRDAGVAKGAGLRSLRVLNCQGKGTVSGTLIGLEFIRKSQLVQPVGPLVVLLPLAGGYSRVFNAACQRLARAGVVLVTAAGNFRDDACLYSPASAPEVITVGATNAQDQPVTLGTLGTNFGRCVDLFAPGEDIIGASSDCSTCFVSRSGTSQAAAHVAGIAAMMLSAEPELTLAELRQRLIHFSAKDVINEAWFPEDQRVLTPNLVAALPPSTHRAGWQLFCRTVWSAHSGPTRMATAVVRCAPDEELLSCSSFSRSGKRRGERIEAQGGKRVCRAHNAFGGEGVYAIARCCLLPQVNCSVHTAPPAGASMGTRVHCHQQGHVLTGCSSHWEVEDLGTHKPPVLRPRGQPNQCVGHREASIHASCCHAPGLECKVKEHGIPAPQEQVIVACEDGWTLTGCNALPGTSHVLGAYAVDNTCVVRSRDVSTTGSTSEEAMAAVAICCRSRHLVQASQELQ.

An N-terminal signal peptide occupies residues 1 to 30; that stretch reads MGTVSSRRSWWPLPLPLLLLLLLGLAGARA. The propeptide occupies 31–152; that stretch reads QEDEDGDYEE…IEEDSSVFAQ (122 aa). A Sulfotyrosine modification is found at Tyr38. At Ser47 the chain carries Phosphoserine. Positions 77 to 149 constitute an Inhibitor I9 domain; sequence TYVVVLKEET…VDYIEEDSSV (73 aa). One can recognise a Peptidase S8 domain in the interval 155–444; the sequence is PWNLERITPA…VLTPNLVAAL (290 aa). Residues Asp186 and His226 each act as charge relay system in the active site. 2 disulfides stabilise this stretch: Cys223–Cys255 and Cys323–Cys358. The active-site Charge relay system is the Ser386. The tract at residues 450–692 is C-terminal domain; sequence RAGWQLFCRT…HLVQASQELQ (243 aa). 3 disulfides stabilise this stretch: Cys457–Cys527, Cys477–Cys526, and Cys486–Cys509. N-linked (GlcNAc...) asparagine glycosylation is present at Asn533. Intrachain disulfides connect Cys534-Cys601, Cys552-Cys600, Cys562-Cys588, Cys608-Cys679, Cys626-Cys678, and Cys635-Cys654. Ser688 carries the post-translational modification Phosphoserine.

This sequence belongs to the peptidase S8 family. In terms of assembly, monomer. Can self-associate to form dimers and higher multimers which may have increased LDLR degrading activity. The precursor protein but not the mature protein may form multimers. Interacts with APOB, VLDLR, LRP8/APOER2 and BACE1. The full-length immature form (pro-PCSK9) interacts with SCNN1A, SCNN1B and SCNN1G. The pro-PCSK9 form (via C-terminal domain) interacts with LDLR. Interacts (via the C-terminal domain) with ANXA2 (via repeat Annexin 1); the interaction inhibits the degradation of LDLR. Requires Ca(2+) as cofactor. Cleavage by furin and PCSK5 generates a truncated inactive protein that is unable to induce LDLR degradation. Post-translationally, undergoes autocatalytic cleavage in the endoplasmic reticulum to release the propeptide from the N-terminus and the cleavage of the propeptide is strictly required for its maturation and activation. The cleaved propeptide however remains associated with the catalytic domain through non-covalent interactions, preventing potential substrates from accessing its active site. As a result, it is secreted from cells as a propeptide-containing, enzymatically inactive protein. In terms of processing, phosphorylation protects the propeptide against proteolysis.

It localises to the cytoplasm. Its subcellular location is the secreted. The protein resides in the endosome. The protein localises to the lysosome. It is found in the cell surface. It localises to the endoplasmic reticulum. Its subcellular location is the golgi apparatus. Its proteolytic activity is autoinhibited by the non-covalent binding of the propeptide to the catalytic domain. Inhibited by EGTA. Functionally, crucial player in the regulation of plasma cholesterol homeostasis. Binds to low-density lipid receptor family members: low density lipoprotein receptor (LDLR), very low density lipoprotein receptor (VLDLR), apolipoprotein E receptor (LRP1/APOER) and apolipoprotein receptor 2 (LRP8/APOER2), and promotes their degradation in intracellular acidic compartments. Acts via a non-proteolytic mechanism to enhance the degradation of the hepatic LDLR through a clathrin LDLRAP1/ARH-mediated pathway. May prevent the recycling of LDLR from endosomes to the cell surface or direct it to lysosomes for degradation. Can induce ubiquitination of LDLR leading to its subsequent degradation. Inhibits intracellular degradation of APOB via the autophagosome/lysosome pathway in a LDLR-independent manner. Involved in the disposal of non-acetylated intermediates of BACE1 in the early secretory pathway. Inhibits epithelial Na(+) channel (ENaC)-mediated Na(+) absorption by reducing ENaC surface expression primarily by increasing its proteasomal degradation. Regulates neuronal apoptosis via modulation of LRP8/APOER2 levels and related anti-apoptotic signaling pathways. The protein is Proprotein convertase subtilisin/kexin type 9 (PCSK9) of Colobus guereza (Mantled guereza).